The primary structure comprises 333 residues: Tryptophan--tRNA ligase (333 aa).

Residues 9-11 and 17-18 contribute to the ATP site; these read QPT and GN. The 'HIGH' region signature appears at 10–18; the sequence is PTNNLTLGN. An L-tryptophan-binding site is contributed by Asp-140. ATP contacts are provided by residues 152 to 154, Ile-191, and 200 to 204; these read GQD and KMSKS. The short motif at 200 to 204 is the 'KMSKS' region element; the sequence is KMSKS.

The protein belongs to the class-I aminoacyl-tRNA synthetase family. As to quaternary structure, homodimer.

The protein localises to the cytoplasm. It catalyses the reaction tRNA(Trp) + L-tryptophan + ATP = L-tryptophyl-tRNA(Trp) + AMP + diphosphate + H(+). In terms of biological role, catalyzes the attachment of tryptophan to tRNA(Trp). The protein is Tryptophan--tRNA ligase of Ureaplasma parvum serovar 3 (strain ATCC 700970).